The sequence spans 295 residues: F-box protein SKIP24 (295 aa).

The 48-residue stretch at 19–66 (VKSSTFSYKDLCCISISSRRLFRLSCDDSLWDLLLVHDFPNHIVSASS) folds into the F-box; degenerate domain. 2 coiled-coil regions span residues 82–129 (REKE…SSLQ) and 167–209 (EGRL…ESMK). The tract at residues 217 to 245 (KSIRNGDQGSNGKTKKLKTSINYSGDQVS) is disordered. A compositionally biased stretch (polar residues) spans 235–245 (TSINYSGDQVS).

As to quaternary structure, part of a SCF (ASK-cullin-F-box) protein ligase complex. Interacts with SKP1A/ASK1 and SPK1B/ASK2.

It participates in protein modification; protein ubiquitination. Functionally, component of SCF(ASK-cullin-F-box) E3 ubiquitin ligase complexes, which may mediate the ubiquitination and subsequent proteasomal degradation of target proteins. The sequence is that of F-box protein SKIP24 (SKIP24) from Arabidopsis thaliana (Mouse-ear cress).